The primary structure comprises 358 residues: Magnesium-protoporphyrin IX monomethyl ester [oxidative] cyclase 2 (358 aa).

Belongs to the AcsF family. It depends on Fe cation as a cofactor.

The enzyme catalyses Mg-protoporphyrin IX 13-monomethyl ester + 3 NADPH + 3 O2 + 2 H(+) = 3,8-divinyl protochlorophyllide a + 3 NADP(+) + 5 H2O. It functions in the pathway porphyrin-containing compound metabolism; chlorophyll biosynthesis (light-independent). Its function is as follows. Catalyzes the formation of the isocyclic ring in chlorophyll biosynthesis. Mediates the cyclase reaction, which results in the formation of divinylprotochlorophyllide (Pchlide) characteristic of all chlorophylls from magnesium-protoporphyrin IX 13-monomethyl ester (MgPMME). This Nostoc sp. (strain PCC 7120 / SAG 25.82 / UTEX 2576) protein is Magnesium-protoporphyrin IX monomethyl ester [oxidative] cyclase 2.